Reading from the N-terminus, the 224-residue chain is UPF0758 protein VFMJ11_0123 (224 aa).

In terms of domain architecture, MPN spans 102–224; sequence ALTSPEHTKR…IVSFAERGWI (123 aa). Zn(2+) is bound by residues His173, His175, and Asp186. Positions 173-186 match the JAMM motif motif; that stretch reads HNHPSGVAEPSQAD.

Belongs to the UPF0758 family.

The polypeptide is UPF0758 protein VFMJ11_0123 (Aliivibrio fischeri (strain MJ11) (Vibrio fischeri)).